Reading from the N-terminus, the 76-residue chain is Nemertide alpha-1 (76 aa).

Residues 1–28 (YRIASSSIAKMKTAVFLVGLLFLGLVFA) form the signal peptide. Residues 29–44 (DEAAIDSEFDQSIDKR) constitute a propeptide that is removed on maturation. Intrachain disulfides connect Cys46-Cys60, Cys53-Cys64, and Cys59-Cys70. 2 positions are modified to 4-hydroxyproline: Pro72 and Pro73.

It belongs to the nemertide family. Confined to the epidermis and to the mucus layer.

Its subcellular location is the secreted. Functionally, highly potent toxin against insect sodium channel (Nav) and with less potent activity against mammalian sodium channels. Potently inhibits inactivation of insect sodium channels of B.germanica (BgNav1) (EC(50)=8.6 nM), D.melanogaster (Dm Nav1), and arachnid sodium channel V.destructor (VdNav1). Also delays the inactivation of most mammalian Nav channels tested (human Nav1.1/SCN1A; EC(50)=124.1 nM, rat Nav1.2/SCN2A; EC(50)=359.6 nM, rat Nav1.3/SCN3A; EC(50)=135.4 nM, rat Nav1.4/SCN4A; EC(50)=145.5 nM, human Nav1.5/SCN5A; EC(50)=138.3 nM, mouse Nav1.6/SCN8A; EC(50)=240.4 nM, human Nav1.9/SCN9A; EC(50)=76.5 nM). 1 uM is enough to completely inhibits the inactivation, resulting in sustained non-inactivating currents. In addition, the toxin significantly enhances the recovery from inactivation, and the open state is not required for the toxin to interact with the channel. In vivo, injection into green crabs (Carcinus maenas at 1 mug/kg) of small doses (1-5 ug/kg) results in slow and fast permanent paralysis, whereas injection of high doses (more than 10 ug/kg) causes death. Injection into juvenile Blaptica dubia cockroaches results in death or permanent paralysis at doses higher than 7.1 ug/kg. Injection into brine shrimp (Artemia salina) stops movement or causes death after 24 hours (EC(50)=0.3 uM). In the rare inherited cardiac arrhythmia Brugada syndrome 1 (BRGDA1), this toxin is able to restore the loss of function by reducing channel inactivation, without affecting activation, by binding to Nav1.5/SCN5A. This is Nemertide alpha-1 from Lineus lacteus (Ribbon worm).